Here is a 227-residue protein sequence, read N- to C-terminus: MTVQIITIDGPSGSGKGTLAAKLANHYGFHLLDSGALYRLLGLSLHHKNLLDDLDTCLSECVEAAIQINIKFETKNDSTIILLDGEDVTQTIRTERVGEFASKVAAVPELRTALFERQRAFIQLPGLVADGRDMATAIFPEAQAKIYLTASAESRAERRVKQLQGMGLDVKISDILANIQSRDKRDMERTVAPLRPAVDAYQIDSSNLSIDEVFQLMVNYVDQCIKA.

Residue 10-18 participates in ATP binding; the sequence is GPSGSGKGT.

This sequence belongs to the cytidylate kinase family. Type 1 subfamily.

It localises to the cytoplasm. It catalyses the reaction CMP + ATP = CDP + ADP. The catalysed reaction is dCMP + ATP = dCDP + ADP. The polypeptide is Cytidylate kinase (Acinetobacter baylyi (strain ATCC 33305 / BD413 / ADP1)).